The following is a 169-amino-acid chain: Lipoprotein signal peptidase (169 aa).

2 helical membrane-spanning segments follow: residues 56-76 (FLPPGVLLILTTIIVSGVIIY) and 84-104 (QPLFLGSFGLIAGGGIGNLID). Active-site residues include Asp113 and Asp139. Residues 132 to 152 (WPIFNIADSAITIGACMLIIF) form a helical membrane-spanning segment.

Belongs to the peptidase A8 family.

Its subcellular location is the cell inner membrane. The catalysed reaction is Release of signal peptides from bacterial membrane prolipoproteins. Hydrolyzes -Xaa-Yaa-Zaa-|-(S,diacylglyceryl)Cys-, in which Xaa is hydrophobic (preferably Leu), and Yaa (Ala or Ser) and Zaa (Gly or Ala) have small, neutral side chains.. It functions in the pathway protein modification; lipoprotein biosynthesis (signal peptide cleavage). In terms of biological role, this protein specifically catalyzes the removal of signal peptides from prolipoproteins. This chain is Lipoprotein signal peptidase, found in Chlorobium phaeovibrioides (strain DSM 265 / 1930) (Prosthecochloris vibrioformis (strain DSM 265)).